Reading from the N-terminus, the 132-residue chain is Large ribosomal subunit protein bL17 (132 aa).

It belongs to the bacterial ribosomal protein bL17 family. Part of the 50S ribosomal subunit. Contacts protein L32.

In Ehrlichia canis (strain Jake), this protein is Large ribosomal subunit protein bL17.